Here is a 794-residue protein sequence, read N- to C-terminus: MALHNPQYIFGDFSPDEFNQFFVTPRSSVELPPYSGTQCGIQAEEELLDGQEHQRIEFGVDEVIEPSDGLQRAPSYSISSTLNPQAPEFILGCPTSKKTPDDIEKDETYSSIDQYPASALALESSSNAEAETLENDSGAGGLGQRERKKKKKRPPGYYSYLKDGSEEGASPAALVNGHATSVGTNSEGVEDPEFMVDMLPSVMPRTCDSPQNPMDLISDPVPDSPFPRTLGGDARTAGLPEGCRETDFEQPCLPTDNLLRTAVTQPNAGADTTENLAVANGKILESLGEGTAAANGVELHTDESADLDPAKPESQSPPAESALSVSGAISISQPAKSWASLFHDSKPSSSSPVAYVETKCSPPVPSPLASEKQMEVKEGLVPVSEDPVAIKIAELLETVTLVHKPVSLQPRGLINKGNWCYINATLQALVACPPMYHLMKFIPLYSKVQRPCTSTPMIDSFVRLMNEFTNMPVPPKPRQALGDKIVRDIRPGAAFEPTYIYRLLTVIKSSLSEKGRQEDAEEYLGFILNGLHEEMLSLKKLLSPTHEKHSVSNGPGSHLIEDEELEDTGEGSEDEWEQVGPKNKTSVTRQADFVQTPITGIFGGHIRSVVYQQSSKESATLQPFFTLQLDIQSDKIRTVQDALESLVARESVQGYTTKTKQEVEVSRRVTLEKLPPVLVLHLKRFVYEKTGGCQKLVKNIEYPVDLEISRELLSPGVKNKNFKCHRTYRLFAVVYHHGNSATGGHYTTDVFQIGLNGWLRIDDQTVKVINQYQVVRPSADRTAYLLYYRRVDLL.

Residue A2 is modified to N-acetylalanine. The interaction with p53/TP53 stretch occupies residues 2–99; it reads ALHNPQYIFG…ILGCPTSKKT (98 aa). Residues 6 to 21 form a G3BP1-binding region; the sequence is PQYIFGDFSPDEFNQF. Phosphothreonine is present on residues T24 and T99. A disordered region spans residues 123–164; that stretch reads ESSSNAEAETLENDSGAGGLGQRERKKKKKRPPGYYSYLKDG. Phosphoserine is present on residues S209, S224, and S316. A disordered region spans residues 303–326; it reads ESADLDPAKPESQSPPAESALSVS. Residues 313–326 are compositionally biased toward polar residues; sequence ESQSPPAESALSVS. S332 carries the phosphoserine; by ATM modification. Phosphoserine occurs at positions 361 and 366. The region spanning 411–791 is the USP domain; it reads RGLINKGNWC…TAYLLYYRRV (381 aa). C420 (nucleophile) is an active-site residue. A Phosphoserine modification is found at S543. The interval 546-588 is disordered; that stretch reads HEKHSVSNGPGSHLIEDEELEDTGEGSEDEWEQVGPKNKTSVT. Residues 561 to 577 are compositionally biased toward acidic residues; the sequence is EDEELEDTGEGSEDEWE. The residue at position 568 (T568) is a Phosphothreonine. S572 bears the Phosphoserine mark. Catalysis depends on H745, which acts as the Proton acceptor.

This sequence belongs to the peptidase C19 family. USP10 subfamily. Found in a deubiquitination complex with TANK, USP10 and ZC3H12A; this complex inhibits genotoxic stress- or interleukin-1-beta (IL1B)-mediated NF-kappa-B activation by promoting IKBKG or TRAF6 deubiquitination. Interacts with IKBKG; this interaction increases in response to DNA damage. Interacts with TANK; this interaction increases in response to DNA damage. Interacts with TRAF6; this interaction increases in response to DNA damage. Interacts with ZC3H12A; this interaction increases in response to DNA damage. Interacts with G3BP1 (via NTF2 domain) and G3BP2 (via NTF2 domain); inhibiting stress granule formation. Post-translationally, phosphorylated by ATM following DNA damage, leading to stabilization and translocation it to the nucleus. In terms of processing, ubiquitinated. Deubiquitinated by USP13.

The protein resides in the cytoplasm. It localises to the nucleus. The protein localises to the early endosome. It carries out the reaction Thiol-dependent hydrolysis of ester, thioester, amide, peptide and isopeptide bonds formed by the C-terminal Gly of ubiquitin (a 76-residue protein attached to proteins as an intracellular targeting signal).. Its activity is regulated as follows. Specifically inhibited by spautin-1 (specific and potent autophagy inhibitor-1), a derivative of MBCQ that binds to USP10 and inhibits deubiquitinase activity. Regulated by PIK3C3/VPS34-containing complexes. Hydrolase that can remove conjugated ubiquitin from target proteins such as p53/TP53, RPS2/us5, RPS3/us3, RPS10/eS10, BECN1, SNX3 and CFTR. Acts as an essential regulator of p53/TP53 stability: in unstressed cells, specifically deubiquitinates p53/TP53 in the cytoplasm, leading to counteract MDM2 action and stabilize p53/TP53. Following DNA damage, translocates to the nucleus and deubiquitinates p53/TP53, leading to regulate the p53/TP53-dependent DNA damage response. Component of a regulatory loop that controls autophagy and p53/TP53 levels: mediates deubiquitination of BECN1, a key regulator of autophagy, leading to stabilize the PIK3C3/VPS34-containing complexes. In turn, PIK3C3/VPS34-containing complexes regulate USP10 stability, suggesting the existence of a regulatory system by which PIK3C3/VPS34-containing complexes regulate p53/TP53 protein levels via USP10 and USP13. Does not deubiquitinate MDM2. Plays a key role in 40S ribosome subunit recycling when a ribosome has stalled during translation: acts both by inhibiting formation of stress granules, which store stalled translation pre-initiation complexes, and mediating deubiquitination of 40S ribosome subunits. Acts as a negative regulator of stress granules formation by lowering G3BP1 and G3BP2 valence, thereby preventing G3BP1 and G3BP2 ability to undergo liquid-liquid phase separation (LLPS) and assembly of stress granules. Promotes 40S ribosome subunit recycling following ribosome dissociation in response to ribosome stalling by mediating deubiquitination of 40S ribosomal proteins RPS2/us5, RPS3/us3 and RPS10/eS10, thereby preventing their degradation by the proteasome. Part of a ribosome quality control that takes place when ribosomes have stalled during translation initiation (iRQC): USP10 acts by removing monoubiquitination of RPS2/us5 and RPS3/us3, promoting 40S ribosomal subunit recycling. Deubiquitinates CFTR in early endosomes, enhancing its endocytic recycling. Involved in a TANK-dependent negative feedback response to attenuate NF-kappa-B activation via deubiquitinating IKBKG or TRAF6 in response to interleukin-1-beta (IL1B) stimulation or upon DNA damage. Deubiquitinates TBX21 leading to its stabilization. Plays a negative role in the RLR signaling pathway upon RNA virus infection by blocking the RIGI-mediated MAVS activation. Mechanistically, removes the unanchored 'Lys-63'-linked polyubiquitin chains of MAVS to inhibit its aggregation, essential for its activation. This Rattus norvegicus (Rat) protein is Ubiquitin carboxyl-terminal hydrolase 10 (Usp10).